Consider the following 107-residue polypeptide: Protein HitA (107 aa).

The HIT domain occupies Ile-5–Val-107. A Histidine triad motif motif is present at residues His-97–His-101.

This chain is Protein HitA (hitA), found in Neisseria gonorrhoeae.